The sequence spans 475 residues: UDP-N-acetylmuramate--L-alanine ligase (475 aa).

112 to 118 (GTHGKTT) provides a ligand contact to ATP.

It belongs to the MurCDEF family.

The protein localises to the cytoplasm. It catalyses the reaction UDP-N-acetyl-alpha-D-muramate + L-alanine + ATP = UDP-N-acetyl-alpha-D-muramoyl-L-alanine + ADP + phosphate + H(+). It functions in the pathway cell wall biogenesis; peptidoglycan biosynthesis. Its function is as follows. Cell wall formation. This chain is UDP-N-acetylmuramate--L-alanine ligase, found in Cupriavidus pinatubonensis (strain JMP 134 / LMG 1197) (Cupriavidus necator (strain JMP 134)).